The chain runs to 480 residues: Cytochrome b-c1 complex subunit 1, mitochondrial (480 aa).

Residues 1-34 constitute a mitochondrion transit peptide; sequence MAASVVCRAATAGAQVLLRARRSPALLRTPALRS. An N6-acetyllysine mark is found at K111 and K138. K163 carries the post-translational modification N6-acetyllysine; alternate. An N6-succinyllysine; alternate modification is found at K163. Position 212 is a phosphoserine (S212). The residue at position 248 (K248) is an N6-acetyllysine.

It belongs to the peptidase M16 family. UQCRC1/QCR1 subfamily. In terms of assembly, component of the ubiquinol-cytochrome c oxidoreductase (cytochrome b-c1 complex, complex III, CIII), a multisubunit enzyme composed of 11 subunits. The complex is composed of 3 respiratory subunits cytochrome b, cytochrome c1 and Rieske protein UQCRFS1, 2 core protein subunits UQCRC1/QCR1 and UQCRC2/QCR2, and 6 low-molecular weight protein subunits UQCRH/QCR6, UQCRB/QCR7, UQCRQ/QCR8, UQCR10/QCR9, UQCR11/QCR10 and subunit 9, the cleavage product of Rieske protein UQCRFS1. The complex exists as an obligatory dimer and forms supercomplexes (SCs) in the inner mitochondrial membrane with NADH-ubiquinone oxidoreductase (complex I, CI) and cytochrome c oxidase (complex IV, CIV), resulting in different assemblies (supercomplex SCI(1)III(2)IV(1) and megacomplex MCI(2)III(2)IV(2)). Interacts with UQCC6. Interacts with STMP1. As to expression, expressed in brain, including substantia nigra, striatum, cortex and cerebellum, and in spinal cord, heart, kidney, liver and muscle.

The protein resides in the mitochondrion inner membrane. Its function is as follows. Component of the ubiquinol-cytochrome c oxidoreductase, a multisubunit transmembrane complex that is part of the mitochondrial electron transport chain which drives oxidative phosphorylation. The respiratory chain contains 3 multisubunit complexes succinate dehydrogenase (complex II, CII), ubiquinol-cytochrome c oxidoreductase (cytochrome b-c1 complex, complex III, CIII) and cytochrome c oxidase (complex IV, CIV), that cooperate to transfer electrons derived from NADH and succinate to molecular oxygen, creating an electrochemical gradient over the inner membrane that drives transmembrane transport and the ATP synthase. The cytochrome b-c1 complex catalyzes electron transfer from ubiquinol to cytochrome c, linking this redox reaction to translocation of protons across the mitochondrial inner membrane, with protons being carried across the membrane as hydrogens on the quinol. In the process called Q cycle, 2 protons are consumed from the matrix, 4 protons are released into the intermembrane space and 2 electrons are passed to cytochrome c. The 2 core subunits UQCRC1/QCR1 and UQCRC2/QCR2 are homologous to the 2 mitochondrial-processing peptidase (MPP) subunits beta-MPP and alpha-MPP respectively, and they seem to have preserved their MPP processing properties. May be involved in the in situ processing of UQCRFS1 into the mature Rieske protein and its mitochondrial targeting sequence (MTS)/subunit 9 when incorporated into complex III. Seems to play an important role in the maintenance of proper mitochondrial function in nigral dopaminergic neurons. In Homo sapiens (Human), this protein is Cytochrome b-c1 complex subunit 1, mitochondrial (UQCRC1).